Consider the following 268-residue polypeptide: Embryonic abundant protein USP87 (268 aa).

The first 22 residues, 1–22 (MEFAHLTVLSLFCLAFVGITAT), serve as a signal peptide directing secretion. Repeat copies occupy residues 50–55 (GKTNSL), 83–88 (GNTNSV), 101–106 (GVTDSI), 166–183 (YVVEDVKKVGDNAVMCHR), and 202–222 (YVVSLVASDGTKTKALTVCHH). The tract at residues 50–106 (GKTNSLPIKSEELKQYSTLFFEHDLHPRKNFILGNTNSVGSIIRPFTKSRQGVTDSI) is 3 X 6 AA approximate repeats. A BURP domain is found at 68 to 259 (LFFEHDLHPR…GNKAAAWVPN (192 aa)). A 2 X approximate repeats region spans residues 166-222 (YVVEDVKKVGDNAVMCHRLNFEKVVFNCHQVRDTTAYVVSLVASDGTKTKALTVCHH). Residue N259 is glycosylated (N-linked (GlcNAc...) asparagine).

As to expression, seed.

This chain is Embryonic abundant protein USP87, found in Vicia faba (Broad bean).